The primary structure comprises 231 residues: Phosphatidylserine decarboxylase proenzyme (231 aa).

The Schiff-base intermediate with substrate; via pyruvic acid role is filled by Ser189. A Pyruvic acid (Ser); by autocatalysis modification is found at Ser189.

Belongs to the phosphatidylserine decarboxylase family. PSD-A subfamily. Heterodimer of a large membrane-associated beta subunit and a small pyruvoyl-containing alpha subunit. The cofactor is pyruvate. In terms of processing, is synthesized initially as an inactive proenzyme. Formation of the active enzyme involves a self-maturation process in which the active site pyruvoyl group is generated from an internal serine residue via an autocatalytic post-translational modification. Two non-identical subunits are generated from the proenzyme in this reaction, and the pyruvate is formed at the N-terminus of the alpha chain, which is derived from the carboxyl end of the proenzyme. The post-translation cleavage follows an unusual pathway, termed non-hydrolytic serinolysis, in which the side chain hydroxyl group of the serine supplies its oxygen atom to form the C-terminus of the beta chain, while the remainder of the serine residue undergoes an oxidative deamination to produce ammonia and the pyruvoyl prosthetic group on the alpha chain.

It localises to the cell membrane. It catalyses the reaction a 1,2-diacyl-sn-glycero-3-phospho-L-serine + H(+) = a 1,2-diacyl-sn-glycero-3-phosphoethanolamine + CO2. Its pathway is phospholipid metabolism; phosphatidylethanolamine biosynthesis; phosphatidylethanolamine from CDP-diacylglycerol: step 2/2. In terms of biological role, catalyzes the formation of phosphatidylethanolamine (PtdEtn) from phosphatidylserine (PtdSer). This is Phosphatidylserine decarboxylase proenzyme from Chelativorans sp. (strain BNC1).